The following is a 180-amino-acid chain: Large ribosomal subunit protein uL22 (180 aa).

2 disordered regions span residues methionine 1–arginine 20 and proline 160–alanine 180. The span at lysine 8–arginine 20 shows a compositional bias: polar residues.

It belongs to the universal ribosomal protein uL22 family.

The chain is Large ribosomal subunit protein uL22 (rpl17) from Dictyostelium discoideum (Social amoeba).